Here is a 338-residue protein sequence, read N- to C-terminus: Lipoate-protein ligase A (338 aa).

The 188-residue stretch at 29-216 (PATQRVLFLW…AFFSHYGERV (188 aa)) folds into the BPL/LPL catalytic domain. Residues Arg-71, 76–79 (GAVF), and Lys-134 contribute to the ATP site. Lys-134 contributes to the (R)-lipoate binding site.

This sequence belongs to the LplA family. As to quaternary structure, monomer.

It is found in the cytoplasm. It carries out the reaction L-lysyl-[lipoyl-carrier protein] + (R)-lipoate + ATP = N(6)-[(R)-lipoyl]-L-lysyl-[lipoyl-carrier protein] + AMP + diphosphate + H(+). Its pathway is protein modification; protein lipoylation via exogenous pathway; protein N(6)-(lipoyl)lysine from lipoate: step 1/2. It functions in the pathway protein modification; protein lipoylation via exogenous pathway; protein N(6)-(lipoyl)lysine from lipoate: step 2/2. Its function is as follows. Catalyzes both the ATP-dependent activation of exogenously supplied lipoate to lipoyl-AMP and the transfer of the activated lipoyl onto the lipoyl domains of lipoate-dependent enzymes. The chain is Lipoate-protein ligase A from Klebsiella pneumoniae (strain 342).